A 419-amino-acid chain; its full sequence is 3-oxo-isoapionate-4-phosphate decarboxylase (419 aa).

Mg(2+) contacts are provided by lysine 179, aspartate 181, and glutamate 182. Position 179 is an N6-carboxylysine (lysine 179).

It belongs to the RuBisCO large chain family. Mg(2+) is required as a cofactor.

It catalyses the reaction 3-oxoisoapionate 4-phosphate + H(+) = L-erythrulose 1-phosphate + CO2. It functions in the pathway carbohydrate metabolism. Involved in catabolism of D-apiose. Catalyzes the decarboxylation of 3-oxo-isoapionate 4-phosphate to L-erythrulose 1-phosphate. This chain is 3-oxo-isoapionate-4-phosphate decarboxylase, found in Rhizobium rhizogenes (strain K84 / ATCC BAA-868) (Agrobacterium radiobacter).